The following is a 279-amino-acid chain: MTQFDKQYNSIIKDIINNGISDEEFDVRTKWDSDGTPAHTLSVMSKQMRFDNSEVPILTTKKVAWKTAIKELLWIWQLKSNDVNDLNKMGVHIWDQWKQEDGTIGHAYGFQLGKKNRSLNGEKVDQVDYLLHQLKNNPSSRRHITMLWNPDDLDAMSLTPCVYETQWYVKHGKLHLEVRARSNDMALGNPFNVFQYNVLQRMIAQVTGYELGEYIFNIGDCHVYTRHIDNLKIQMEREQFEAPELWINPEVKDFYNFTIDDFKLINYKHGDKLLFEVAV.

Arginine 141–arginine 142 is a binding site for dUMP. Cysteine 161 serves as the catalytic Nucleophile. DUMP contacts are provided by residues arginine 181–aspartate 184, asparagine 192, and histidine 222–tyrosine 224. Aspartate 184 is a binding site for (6R)-5,10-methylene-5,6,7,8-tetrahydrofolate. Alanine 278 serves as a coordination point for (6R)-5,10-methylene-5,6,7,8-tetrahydrofolate.

Belongs to the thymidylate synthase family. Bacterial-type ThyA subfamily. Homodimer.

The protein resides in the cytoplasm. It catalyses the reaction dUMP + (6R)-5,10-methylene-5,6,7,8-tetrahydrofolate = 7,8-dihydrofolate + dTMP. The protein operates within pyrimidine metabolism; dTTP biosynthesis. Its function is as follows. Catalyzes the reductive methylation of 2'-deoxyuridine-5'-monophosphate (dUMP) to 2'-deoxythymidine-5'-monophosphate (dTMP) while utilizing 5,10-methylenetetrahydrofolate (mTHF) as the methyl donor and reductant in the reaction, yielding dihydrofolate (DHF) as a by-product. This enzymatic reaction provides an intracellular de novo source of dTMP, an essential precursor for DNA biosynthesis. This chain is Thymidylate synthase, found in Bacillus subtilis subsp. natto.